Here is a 103-residue protein sequence, read N- to C-terminus: Histone H4 (103 aa).

Residues 1 to 14 (MSGRGKGGKGLGKG) show a composition bias toward gly residues. Positions 1–20 (MSGRGKGGKGLGKGGAKRHR) are disordered. Ser2 carries the post-translational modification N-acetylserine. Lys17 carries the N6-acetyllysine modification. The DNA-binding element occupies 17–21 (KRHRK). Lys21 bears the N6-methyllysine mark.

The protein belongs to the histone H4 family. The nucleosome is a histone octamer containing two molecules each of H2A, H2B, H3 and H4 assembled in one H3-H4 heterotetramer and two H2A-H2B heterodimers. The octamer wraps approximately 147 bp of DNA.

Its subcellular location is the nucleus. The protein resides in the chromosome. In terms of biological role, core component of nucleosome. Nucleosomes wrap and compact DNA into chromatin, limiting DNA accessibility to the cellular machineries which require DNA as a template. Histones thereby play a central role in transcription regulation, DNA repair, DNA replication and chromosomal stability. DNA accessibility is regulated via a complex set of post-translational modifications of histones, also called histone code, and nucleosome remodeling. The sequence is that of Histone H4 from Eucalyptus globulus (Tasmanian blue gum).